A 518-amino-acid chain; its full sequence is D-aminopeptidase (518 aa).

S62 functions as the Nucleophile in the catalytic mechanism. K65 functions as the Proton donor/acceptor in the catalytic mechanism. Residues 477–487 (QRSMDAPSPGE) are important for specificity. D481 serves as a coordination point for substrate.

It belongs to the peptidase S12 family. In terms of assembly, homodimer.

The enzyme catalyses Release of an N-terminal D-amino acid from a peptide, Xaa-|-Yaa-, in which Xaa is preferably D-Ala, D-Ser or D-Thr. D-amino acid amides and methyl esters also are hydrolyzed, as is glycine amide.. Inhibited by beta-lactam compounds such as 6-aminopenicillic acid, 7-aminocephalosporanic acid, benzylpenicillin and ampicillin. Inhibited by p-chloromercuribenzoate. Hydrolyzes N-terminal residues in D-amino acid-containing peptides. The sequence is that of D-aminopeptidase from Brucella ovis (strain ATCC 25840 / 63/290 / NCTC 10512).